The sequence spans 317 residues: Glutamyl-tRNA reductase-binding protein, chloroplastic (317 aa).

The transit peptide at 1–42 directs the protein to the chloroplast; that stretch reads MQLQTQSFALNLLPSPNFAKPIERREFISLKRDPSRPISLRC.

In terms of assembly, interacts with HEMA1 and forms a heterotetramer of two GLUTRBP and two HEMA1 subunits.

The protein resides in the plastid. Its subcellular location is the chloroplast stroma. Its function is as follows. Involved in the regulation of glutamyl-tRNA reductase (GluTR) which is important for the synthesis and distribution of 5-aminolevulinate, a precursor in heme and chlorophyll biosynthesis. Stimulates GluTR activity and regulates glutamate-1-semialdehyde release. May play a role in heme metabolism. Necessary for efficient photosynthetic electron transport in chloroplasts. The polypeptide is Glutamyl-tRNA reductase-binding protein, chloroplastic (Arabidopsis thaliana (Mouse-ear cress)).